We begin with the raw amino-acid sequence, 286 residues long: Shikimate dehydrogenase (NADP(+)) (286 aa).

Shikimate is bound by residues 22–24 and Thr71; that span reads SRS. Lys75 functions as the Proton acceptor in the catalytic mechanism. Glu87 contributes to the NADP(+) binding site. Shikimate-binding residues include Asn96 and Asp111. NADP(+)-binding positions include 136–140, 160–165, and Ile225; these read GAGGA and NRTPER. Shikimate is bound at residue Tyr227. NADP(+) is bound at residue Gly248.

The protein belongs to the shikimate dehydrogenase family. In terms of assembly, homodimer.

It carries out the reaction shikimate + NADP(+) = 3-dehydroshikimate + NADPH + H(+). It functions in the pathway metabolic intermediate biosynthesis; chorismate biosynthesis; chorismate from D-erythrose 4-phosphate and phosphoenolpyruvate: step 4/7. Functionally, involved in the biosynthesis of the chorismate, which leads to the biosynthesis of aromatic amino acids. Catalyzes the reversible NADPH linked reduction of 3-dehydroshikimate (DHSA) to yield shikimate (SA). This chain is Shikimate dehydrogenase (NADP(+)), found in Rhizobium meliloti (strain 1021) (Ensifer meliloti).